The following is a 401-amino-acid chain: Nicotinate phosphoribosyltransferase (401 aa).

His-221 carries the post-translational modification Phosphohistidine; by autocatalysis.

The protein belongs to the NAPRTase family. In terms of processing, transiently phosphorylated on a His residue during the reaction cycle. Phosphorylation strongly increases the affinity for substrates and increases the rate of nicotinate D-ribonucleotide production. Dephosphorylation regenerates the low-affinity form of the enzyme, leading to product release.

The catalysed reaction is nicotinate + 5-phospho-alpha-D-ribose 1-diphosphate + ATP + H2O = nicotinate beta-D-ribonucleotide + ADP + phosphate + diphosphate. It functions in the pathway cofactor biosynthesis; NAD(+) biosynthesis; nicotinate D-ribonucleotide from nicotinate: step 1/1. Its function is as follows. Catalyzes the synthesis of beta-nicotinate D-ribonucleotide from nicotinate and 5-phospho-D-ribose 1-phosphate at the expense of ATP. The polypeptide is Nicotinate phosphoribosyltransferase (Pectobacterium carotovorum subsp. carotovorum (strain PC1)).